The sequence spans 171 residues: uncharacterized protein (171 aa).

This is an uncharacterized protein from Saccharomyces cerevisiae (strain ATCC 204508 / S288c) (Baker's yeast).